We begin with the raw amino-acid sequence, 277 residues long: MKGNIWTIGDVQGCCAPLAELLAHPEIAGDTDSRFWFAGDLVNRGPQSLAVLRRIMAMGERCTAVLGNHDLHLLAAYAGVRKPSKSDTLDEVLQAPDAVDLIDWLRFRPLAHYEAGHLMVHAGVLAKWDVAKTLALAGEVEQALRGPNWRKALQKMYGNEPATWKDDHTGGKRMRVIINALTRIRLCTPSGHMEFATKVAPGAWPAGLVPWFDVPNRATRDVTVVFGHWSTLGLLMRPDVICLDTGCVWGGALSALRLHDRKLVQVKCKRFQDPNGD.

The protein belongs to the Ap4A hydrolase family.

The enzyme catalyses P(1),P(4)-bis(5'-adenosyl) tetraphosphate + H2O = 2 ADP + 2 H(+). Hydrolyzes diadenosine 5',5'''-P1,P4-tetraphosphate to yield ADP. The sequence is that of Bis(5'-nucleosyl)-tetraphosphatase, symmetrical from Bordetella pertussis (strain Tohama I / ATCC BAA-589 / NCTC 13251).